The following is a 318-amino-acid chain: Holliday junction branch migration complex subunit RuvB (318 aa).

The tract at residues 1 to 168 (MPENLEIRPS…FGYVAKIVDY (168 aa)) is large ATPase domain (RuvB-L). ATP contacts are provided by isoleucine 7, arginine 8, glycine 49, lysine 52, threonine 53, threonine 54, arginine 158, tyrosine 168, and arginine 205. Threonine 53 contributes to the Mg(2+) binding site. Residues 169–239 (TLEDMIQIIR…IVNKTFDSIG (71 aa)) form a small ATPAse domain (RuvB-S) region. Residues 242 to 318 (NQGLSQINIE…RDYLLELKTN (77 aa)) form a head domain (RuvB-H) region. Arginine 278, lysine 297, and arginine 302 together coordinate DNA.

The protein belongs to the RuvB family. Homohexamer. Forms an RuvA(8)-RuvB(12)-Holliday junction (HJ) complex. HJ DNA is sandwiched between 2 RuvA tetramers; dsDNA enters through RuvA and exits via RuvB. An RuvB hexamer assembles on each DNA strand where it exits the tetramer. Each RuvB hexamer is contacted by two RuvA subunits (via domain III) on 2 adjacent RuvB subunits; this complex drives branch migration. In the full resolvosome a probable DNA-RuvA(4)-RuvB(12)-RuvC(2) complex forms which resolves the HJ.

Its subcellular location is the cytoplasm. The enzyme catalyses ATP + H2O = ADP + phosphate + H(+). Its function is as follows. The RuvA-RuvB-RuvC complex processes Holliday junction (HJ) DNA during genetic recombination and DNA repair, while the RuvA-RuvB complex plays an important role in the rescue of blocked DNA replication forks via replication fork reversal (RFR). RuvA specifically binds to HJ cruciform DNA, conferring on it an open structure. The RuvB hexamer acts as an ATP-dependent pump, pulling dsDNA into and through the RuvAB complex. RuvB forms 2 homohexamers on either side of HJ DNA bound by 1 or 2 RuvA tetramers; 4 subunits per hexamer contact DNA at a time. Coordinated motions by a converter formed by DNA-disengaged RuvB subunits stimulates ATP hydrolysis and nucleotide exchange. Immobilization of the converter enables RuvB to convert the ATP-contained energy into a lever motion, pulling 2 nucleotides of DNA out of the RuvA tetramer per ATP hydrolyzed, thus driving DNA branch migration. The RuvB motors rotate together with the DNA substrate, which together with the progressing nucleotide cycle form the mechanistic basis for DNA recombination by continuous HJ branch migration. Branch migration allows RuvC to scan DNA until it finds its consensus sequence, where it cleaves and resolves cruciform DNA. This is Holliday junction branch migration complex subunit RuvB from Mesomycoplasma hyopneumoniae (strain 232) (Mycoplasma hyopneumoniae).